We begin with the raw amino-acid sequence, 159 residues long: NADH-quinone oxidoreductase subunit I (159 aa).

4Fe-4S ferredoxin-type domains lie at 51–80 (RRYENGEERCIACKLCEAVCPAQAIVIESD) and 90–119 (TRYDIDMTKCIYCGLCQEACPVDAIVEGPN). [4Fe-4S] cluster is bound by residues Cys-60, Cys-63, Cys-66, Cys-70, Cys-99, Cys-102, Cys-105, and Cys-109.

Belongs to the complex I 23 kDa subunit family. As to quaternary structure, NDH-1 is composed of 14 different subunits. Subunits NuoA, H, J, K, L, M, N constitute the membrane sector of the complex. Requires [4Fe-4S] cluster as cofactor.

Its subcellular location is the cell inner membrane. The enzyme catalyses a quinone + NADH + 5 H(+)(in) = a quinol + NAD(+) + 4 H(+)(out). NDH-1 shuttles electrons from NADH, via FMN and iron-sulfur (Fe-S) centers, to quinones in the respiratory chain. The immediate electron acceptor for the enzyme in this species is believed to be ubiquinone. Couples the redox reaction to proton translocation (for every two electrons transferred, four hydrogen ions are translocated across the cytoplasmic membrane), and thus conserves the redox energy in a proton gradient. The chain is NADH-quinone oxidoreductase subunit I from Rickettsia typhi (strain ATCC VR-144 / Wilmington).